The chain runs to 559 residues: Protein GRAVITROPIC IN THE LIGHT 1 (559 aa).

The tract at residues 107-127 is disordered; it reads AVNRREEYDTEEEENEEEGEI. Over residues 114–127 the composition is skewed to acidic residues; that stretch reads YDTEEEENEEEGEI.

Required for red (R) and far red (FR) light-induced and phytochrome-mediated deregulation of negative gravitropism leading to randomization of hypocotyl growth orientation. In Arabidopsis thaliana (Mouse-ear cress), this protein is Protein GRAVITROPIC IN THE LIGHT 1.